The sequence spans 300 residues: tRNA-cytidine(32) 2-sulfurtransferase (300 aa).

The PP-loop motif motif lies at 41–46 (SGGKDS). Positions 116, 119, and 207 each coordinate [4Fe-4S] cluster.

This sequence belongs to the TtcA family. As to quaternary structure, homodimer. It depends on Mg(2+) as a cofactor. The cofactor is [4Fe-4S] cluster.

The protein resides in the cytoplasm. The catalysed reaction is cytidine(32) in tRNA + S-sulfanyl-L-cysteinyl-[cysteine desulfurase] + AH2 + ATP = 2-thiocytidine(32) in tRNA + L-cysteinyl-[cysteine desulfurase] + A + AMP + diphosphate + H(+). The protein operates within tRNA modification. Its function is as follows. Catalyzes the ATP-dependent 2-thiolation of cytidine in position 32 of tRNA, to form 2-thiocytidine (s(2)C32). The sulfur atoms are provided by the cysteine/cysteine desulfurase (IscS) system. In Idiomarina loihiensis (strain ATCC BAA-735 / DSM 15497 / L2-TR), this protein is tRNA-cytidine(32) 2-sulfurtransferase.